A 273-amino-acid polypeptide reads, in one-letter code: Large ribosomal subunit protein uL2 (273 aa).

Positions 228-273 (VDHPHGGGEGKTSGGRHPVTPWGFSTKGKKTRKNKRTSKFIVKKRK) are disordered. Residues 254–273 (KGKKTRKNKRTSKFIVKKRK) show a composition bias toward basic residues.

The protein belongs to the universal ribosomal protein uL2 family. Part of the 50S ribosomal subunit. Forms a bridge to the 30S subunit in the 70S ribosome.

One of the primary rRNA binding proteins. Required for association of the 30S and 50S subunits to form the 70S ribosome, for tRNA binding and peptide bond formation. It has been suggested to have peptidyltransferase activity; this is somewhat controversial. Makes several contacts with the 16S rRNA in the 70S ribosome. This chain is Large ribosomal subunit protein uL2, found in Rickettsia prowazekii (strain Madrid E).